A 343-amino-acid chain; its full sequence is S-adenosylmethionine:tRNA ribosyltransferase-isomerase (343 aa).

The protein belongs to the QueA family. Monomer.

It is found in the cytoplasm. The catalysed reaction is 7-aminomethyl-7-carbaguanosine(34) in tRNA + S-adenosyl-L-methionine = epoxyqueuosine(34) in tRNA + adenine + L-methionine + 2 H(+). It functions in the pathway tRNA modification; tRNA-queuosine biosynthesis. Its function is as follows. Transfers and isomerizes the ribose moiety from AdoMet to the 7-aminomethyl group of 7-deazaguanine (preQ1-tRNA) to give epoxyqueuosine (oQ-tRNA). In Dehalococcoides mccartyi (strain ATCC BAA-2100 / JCM 16839 / KCTC 5957 / BAV1), this protein is S-adenosylmethionine:tRNA ribosyltransferase-isomerase.